Here is a 357-residue protein sequence, read N- to C-terminus: MSVSTASTEMSVRKIAAHMKSNPNAKVIFMVGAGISTSCGIPDFRSPGTGLYHNLARLKLPYPEAVFDVDFFQSDPLPFYTLAKELYPGNFRPSKFHYLLKLFQDKDVLKRVYTQNIDTLERQAGVKDDLIIEAHGSFAHCHCIGCGKVYPPQVFKSKLAEHPIKDFVKCDVCGELVKPAIVFFGEDLPDSFSETWLNDSEWLREKITTSGKHPQQPLVIVVGTSLAVYPFASLPEEIPRKVKRVLCNLETVGDFKANKRPTDLIVHQYSDEFAEQLVEELGWQEDFEKILTAQGGMGDNSKEQLLEIVHDLENLSLDQSEHESADKKDKKLQRLNGHDSDEDGASNSSSSQKAAKE.

Residue S2 is modified to N-acetylserine. The 280-residue stretch at 5-284 (TASTEMSVRK…EQLVEELGWQ (280 aa)) folds into the Deacetylase sirtuin-type domain. NAD(+) contacts are provided by residues 32–52 (GAGI…TGLY) and 115–118 (QNID). Catalysis depends on H135, which acts as the Proton acceptor. The Zn(2+) site is built by C143, C146, C170, and C173. NAD(+)-binding positions include 223 to 225 (GTS), 248 to 250 (NLE), and S270. Basic and acidic residues predominate over residues 317–329 (LDQSEHESADKKD). The interval 317–357 (LDQSEHESADKKDKKLQRLNGHDSDEDGASNSSSSQKAAKE) is disordered. Phosphoserine is present on S340.

This sequence belongs to the sirtuin family. Class I subfamily. Homotrimer. Monomer. Homotrimeric in its unliganded state. Undergoes a trimer-monomer transition upon acetyl-lysine substrate binding. Zn(2+) is required as a cofactor.

The protein localises to the cytoplasm. The protein resides in the nucleus. It carries out the reaction N(6)-acetyl-L-lysyl-[protein] + NAD(+) + H2O = 2''-O-acetyl-ADP-D-ribose + nicotinamide + L-lysyl-[protein]. With respect to regulation, inhibited by ADP-ribose and nicotinamide. NAD-dependent histone deacetylase that is involved in nuclear silencing events. Derepresses subtelomeric silencing and increases repression in nucleolar (rDNA) silencing. Its function is negatively regulated by active nuclear export. In Saccharomyces cerevisiae (strain ATCC 204508 / S288c) (Baker's yeast), this protein is NAD-dependent protein deacetylase HST2 (HST2).